The sequence spans 115 residues: Large ribosomal subunit protein uL22c (115 aa).

Belongs to the universal ribosomal protein uL22 family. As to quaternary structure, part of the 50S ribosomal subunit.

It localises to the plastid. The protein localises to the chloroplast. This protein binds specifically to 23S rRNA. Functionally, the globular domain of the protein is located near the polypeptide exit tunnel on the outside of the subunit, while an extended beta-hairpin is found that lines the wall of the exit tunnel in the center of the 70S ribosome. The polypeptide is Large ribosomal subunit protein uL22c (rpl22) (Phaeodactylum tricornutum (strain CCAP 1055/1)).